Reading from the N-terminus, the 255-residue chain is Menaquinol:cytochrome c reductase cytochrome c subunit (255 aa).

3 helical membrane-spanning segments follow: residues 46-62 (WMVG…LTIV), 104-124 (VVGA…APFL), and 137-157 (VAVG…WQSV). The Cytochrome c domain maps to 178-253 (DTNAEGYKVF…ELAKFISETT (76 aa)). The heme c site is built by cysteine 192, cysteine 195, and histidine 196.

It belongs to the cytochrome b family. In terms of assembly, the main subunits of the menaquinol:cytochrome c complex are a Rieske-type iron-sulfur protein (QcrA), a cytochrome b (QcrB) and a cytochrome c (QcrC). The cofactor is heme c.

The protein localises to the cell membrane. In terms of biological role, component of the menaquinol:cytochrome c reductase complex. In Bacillus subtilis (strain 168), this protein is Menaquinol:cytochrome c reductase cytochrome c subunit (qcrC).